The primary structure comprises 230 residues: Cytidylate kinase (230 aa).

Residue 12–20 coordinates ATP; the sequence is GPSGAGKGT.

It belongs to the cytidylate kinase family. Type 1 subfamily.

Its subcellular location is the cytoplasm. The catalysed reaction is CMP + ATP = CDP + ADP. It catalyses the reaction dCMP + ATP = dCDP + ADP. In Shewanella baltica (strain OS223), this protein is Cytidylate kinase.